Here is a 1367-residue protein sequence, read N- to C-terminus: MAP3K epsilon protein kinase 2 (1367 aa).

The Protein kinase domain maps to 20-274 (YMLGDEIGKG…AKTLLSHPWI (255 aa)). HEAT repeat units follow at residues 25–62 (EIGK…EDLN) and 86–125 (LKTK…TVYI). Residues 26–34 (IGKGAYGRV) and Lys-49 contribute to the ATP site. Residue Asp-144 is the Proton acceptor of the active site. An HEAT 3 repeat occupies 218–256 (PYYDLQPMPALYRIVQDDTPPIPDSLSPDITDFLRLCFK). Disordered stretches follow at residues 285 to 422 (LRHS…GRRN) and 437 to 513 (SSHS…VADG). Residues 293–306 (YMKETDSSSEKDAE) are compositionally biased toward basic and acidic residues. Over residues 351 to 363 (LGEEGTDSEDDIN) the composition is skewed to acidic residues. Positions 378–396 (RQSGTCSISSDAKGTSQDV) are enriched in polar residues. Composition is skewed to basic and acidic residues over residues 397–408 (LENHEKYDRDEI) and 475–491 (SLHD…EGKT). Residues 492 to 507 (NEASTSTPTANVNQGD) are compositionally biased toward polar residues. HEAT repeat units follow at residues 538–576 (SQDG…LFPL), 577–614 (QAVE…RPGQ), 633–658 (IPKS…DFLE), 659–700 (NACL…SSPL), and 704–742 (MFIS…VFKL). Residues 792–860 (PRARSGQLDP…LHPDGDRPRL (69 aa)) are disordered. Composition is skewed to polar residues over residues 799–814 (LDPN…TSPS) and 835–845 (ALTSNSQSSDV). Over residues 846-859 (HQPDALHPDGDRPR) the composition is skewed to basic and acidic residues. HEAT repeat units follow at residues 850–888 (ALHP…STDK), 906–943 (DQVR…HESR), 1045–1066 (DYLE…TVKS), 1067–1105 (YMCS…DPNC), 1112–1150 (ADAI…INKR), 1154–1191 (QAAE…ASRN), 1196–1236 (LRAH…KVEQ), 1257–1280 (RHFV…NKTL), 1281–1317 (ALNG…KHPK), and 1347–1367 (QVLV…NTIL).

This sequence belongs to the protein kinase superfamily. Ser/Thr protein kinase family. Autophosphorylated. Expressed in both the sporophytic and the gametophytic tissues, especially in dividing cells. Mostly present in flower buds and mature flowers. Also accumulates in embryos and in roots.

The protein localises to the cytoplasm. The protein resides in the cytoskeleton. Its subcellular location is the microtubule organizing center. It localises to the nucleus. It is found in the nucleolus. The protein localises to the cell membrane. The enzyme catalyses L-seryl-[protein] + ATP = O-phospho-L-seryl-[protein] + ADP + H(+). The catalysed reaction is L-threonyl-[protein] + ATP = O-phospho-L-threonyl-[protein] + ADP + H(+). Functionally, serine/threonine-protein kinase involved in the spatial and temporal control system organizing cortical activities in mitotic and postmitotic cells. Required for the normal functioning of the plasma membrane in developing pollen. Involved in the regulation of cell expansion and embryo development. This Arabidopsis thaliana (Mouse-ear cress) protein is MAP3K epsilon protein kinase 2.